Consider the following 488-residue polypeptide: Glutamyl-tRNA(Gln) amidotransferase subunit A (488 aa).

Active-site charge relay system residues include lysine 77 and serine 152. The active-site Acyl-ester intermediate is the serine 176.

The protein belongs to the amidase family. GatA subfamily. In terms of assembly, heterotrimer of A, B and C subunits.

It catalyses the reaction L-glutamyl-tRNA(Gln) + L-glutamine + ATP + H2O = L-glutaminyl-tRNA(Gln) + L-glutamate + ADP + phosphate + H(+). Its function is as follows. Allows the formation of correctly charged Gln-tRNA(Gln) through the transamidation of misacylated Glu-tRNA(Gln) in organisms which lack glutaminyl-tRNA synthetase. The reaction takes place in the presence of glutamine and ATP through an activated gamma-phospho-Glu-tRNA(Gln). In Streptococcus pneumoniae (strain JJA), this protein is Glutamyl-tRNA(Gln) amidotransferase subunit A.